Here is a 146-residue protein sequence, read N- to C-terminus: Phospholipase A2 147 (146 aa).

Positions 1-19 are cleaved as a signal peptide; sequence MYPAHLLVLLAVCVSLLGA. Residues 20 to 27 constitute a propeptide that is removed on maturation; that stretch reads ASVPPQPL. Disulfide bonds link cysteine 38/cysteine 98, cysteine 54/cysteine 145, cysteine 56/cysteine 72, cysteine 71/cysteine 126, cysteine 78/cysteine 119, cysteine 87/cysteine 112, and cysteine 105/cysteine 117. The Ca(2+) site is built by tyrosine 55, glycine 57, and glycine 59. Residue histidine 75 is part of the active site. Ca(2+) is bound at residue aspartate 76. Aspartate 120 is a catalytic residue.

It belongs to the phospholipase A2 family. Group I subfamily. D49 sub-subfamily. Ca(2+) serves as cofactor. Expressed by the venom gland.

The protein resides in the secreted. It catalyses the reaction a 1,2-diacyl-sn-glycero-3-phosphocholine + H2O = a 1-acyl-sn-glycero-3-phosphocholine + a fatty acid + H(+). Functionally, snake venom phospholipase A2 (PLA2) that inhibits collagen-induced platelet aggregation. PLA2 catalyzes the calcium-dependent hydrolysis of the 2-acyl groups in 3-sn-phosphoglycerides. This is Phospholipase A2 147 from Drysdalia coronoides (White-lipped snake).